The sequence spans 500 residues: Plexin domain-containing protein 1 (500 aa).

Residues 1–18 (MRGELWLLVLVLREAARA) form the signal peptide. Residues 19-426 (LSPQPGAGHD…TKGTPVHLGT (408 aa)) lie on the Extracellular side of the membrane. Disordered regions lie at residues 20–39 (SPQPGAGHDEGPGSGWAAKG) and 46–78 (RRARESPGHVSEPDRTQLSQDLGGGTLAMDTLP). Residue serine 33 is glycosylated (O-linked (Xyl...) (chondroitin sulfate) serine). Residues 47 to 60 (RARESPGHVSEPDR) show a composition bias toward basic and acidic residues. 2 N-linked (GlcNAc...) asparagine glycosylation sites follow: asparagine 80 and asparagine 197. A disordered region spans residues 359–379 (FQDEDHDSASPDTSFSPYDGD). Positions 368-379 (SPDTSFSPYDGD) are enriched in polar residues. The helical transmembrane segment at 427 to 447 (IVGIVLAVLLVAAIILAGIYI) threads the bilayer. Residues 448–500 (NGHPTSNAALFFIERRPHHWPAMKFRSHPDHSTYAEVEPSGHEKEGFMEAEQC) lie on the Cytoplasmic side of the membrane. The segment covering 479 to 494 (STYAEVEPSGHEKEGF) has biased composition (basic and acidic residues). Residues 479–500 (STYAEVEPSGHEKEGFMEAEQC) form a disordered region.

It belongs to the plexin family. In terms of assembly, interacts with NID1. May interact with CTTN. N-glycosylated. Detected in urine (at protein level). Detected in endothelial cells from colorectal cancer, and in endothelial cells from primary cancers of the lung, liver, pancreas, breast and brain. Not detectable in endothelial cells from normal tissue. Expressed in fibrovascular membrane with increased expression in individuals with proliferative diabetic retinopathy.

The protein localises to the secreted. It is found in the cell membrane. It localises to the cell junction. The protein resides in the tight junction. Its subcellular location is the cytoplasm. Its function is as follows. Plays a critical role in endothelial cell capillary morphogenesis. The sequence is that of Plexin domain-containing protein 1 (PLXDC1) from Homo sapiens (Human).